The following is a 413-amino-acid chain: Serine--tRNA ligase (413 aa).

Residue 221–223 (TAE) participates in L-serine binding. 252-254 (RRE) contributes to the ATP binding site. Residue Glu275 participates in L-serine binding. 339 to 342 (EVSS) provides a ligand contact to ATP. Residue Ser375 participates in L-serine binding.

Belongs to the class-II aminoacyl-tRNA synthetase family. Type-1 seryl-tRNA synthetase subfamily. As to quaternary structure, homodimer. The tRNA molecule binds across the dimer.

The protein resides in the cytoplasm. It catalyses the reaction tRNA(Ser) + L-serine + ATP = L-seryl-tRNA(Ser) + AMP + diphosphate + H(+). It carries out the reaction tRNA(Sec) + L-serine + ATP = L-seryl-tRNA(Sec) + AMP + diphosphate + H(+). Its pathway is aminoacyl-tRNA biosynthesis; selenocysteinyl-tRNA(Sec) biosynthesis; L-seryl-tRNA(Sec) from L-serine and tRNA(Sec): step 1/1. Catalyzes the attachment of serine to tRNA(Ser). Is also able to aminoacylate tRNA(Sec) with serine, to form the misacylated tRNA L-seryl-tRNA(Sec), which will be further converted into selenocysteinyl-tRNA(Sec). This chain is Serine--tRNA ligase, found in Dehalococcoides mccartyi (strain ATCC BAA-2100 / JCM 16839 / KCTC 5957 / BAV1).